A 372-amino-acid polypeptide reads, in one-letter code: Chorismate synthase (372 aa).

Arginine 48 and arginine 54 together coordinate NADP(+). Residues 125–127 (RSS), 238–239 (NA), glycine 278, 293–297 (KPTSS), and arginine 319 each bind FMN.

The protein belongs to the chorismate synthase family. As to quaternary structure, homotetramer. It depends on FMNH2 as a cofactor.

The catalysed reaction is 5-O-(1-carboxyvinyl)-3-phosphoshikimate = chorismate + phosphate. Its pathway is metabolic intermediate biosynthesis; chorismate biosynthesis; chorismate from D-erythrose 4-phosphate and phosphoenolpyruvate: step 7/7. In terms of biological role, catalyzes the anti-1,4-elimination of the C-3 phosphate and the C-6 proR hydrogen from 5-enolpyruvylshikimate-3-phosphate (EPSP) to yield chorismate, which is the branch point compound that serves as the starting substrate for the three terminal pathways of aromatic amino acid biosynthesis. This reaction introduces a second double bond into the aromatic ring system. The polypeptide is Chorismate synthase (Xylella fastidiosa (strain 9a5c)).